The following is a 194-amino-acid chain: Fe/S biogenesis protein NfuA (194 aa).

Residues Cys151 and Cys154 each coordinate [4Fe-4S] cluster.

This sequence belongs to the NfuA family. Homodimer. [4Fe-4S] cluster serves as cofactor.

Involved in iron-sulfur cluster biogenesis. Binds a 4Fe-4S cluster, can transfer this cluster to apoproteins, and thereby intervenes in the maturation of Fe/S proteins. Could also act as a scaffold/chaperone for damaged Fe/S proteins. The chain is Fe/S biogenesis protein NfuA from Mannheimia succiniciproducens (strain KCTC 0769BP / MBEL55E).